The primary structure comprises 256 residues: NAD-dependent protein deacetylase (256 aa).

Residues Met-1–Glu-254 enclose the Deacetylase sirtuin-type domain. NAD(+)-binding residues include Ala-28, Thr-32, Phe-39, Arg-40, Gln-105, Ile-107, Asp-108, and His-123. Phe-39 contacts nicotinamide. Nicotinamide contacts are provided by Ile-107 and Asp-108. The active-site Proton acceptor is the His-123. Positions 131, 134, 156, and 159 each coordinate Zn(2+). Thr-197, Ser-198, and Asn-222 together coordinate NAD(+).

It belongs to the sirtuin family. Class U subfamily. The cofactor is Zn(2+).

The protein localises to the cytoplasm. The enzyme catalyses N(6)-acetyl-L-lysyl-[protein] + NAD(+) + H2O = 2''-O-acetyl-ADP-D-ribose + nicotinamide + L-lysyl-[protein]. In terms of biological role, NAD-dependent protein deacetylase which modulates the activities of several enzymes which are inactive in their acetylated form. This Thermodesulfovibrio yellowstonii (strain ATCC 51303 / DSM 11347 / YP87) protein is NAD-dependent protein deacetylase.